We begin with the raw amino-acid sequence, 445 residues long: 3-phosphoshikimate 1-carboxyvinyltransferase (445 aa).

Residues 1-25 (MSHSDQTSPLEARKSAALSGTARVP) form a disordered region. The 3-phosphoshikimate site is built by K28, S29, and R33. K28 contacts phosphoenolpyruvate. Residues G101 and R129 each coordinate phosphoenolpyruvate. Positions 175, 177, 328, and 355 each coordinate 3-phosphoshikimate. Position 177 (Q177) interacts with phosphoenolpyruvate. The Proton acceptor role is filled by D328. The phosphoenolpyruvate site is built by R359 and R402.

This sequence belongs to the EPSP synthase family. In terms of assembly, monomer.

The protein resides in the cytoplasm. The catalysed reaction is 3-phosphoshikimate + phosphoenolpyruvate = 5-O-(1-carboxyvinyl)-3-phosphoshikimate + phosphate. The protein operates within metabolic intermediate biosynthesis; chorismate biosynthesis; chorismate from D-erythrose 4-phosphate and phosphoenolpyruvate: step 6/7. Functionally, catalyzes the transfer of the enolpyruvyl moiety of phosphoenolpyruvate (PEP) to the 5-hydroxyl of shikimate-3-phosphate (S3P) to produce enolpyruvyl shikimate-3-phosphate and inorganic phosphate. The protein is 3-phosphoshikimate 1-carboxyvinyltransferase of Rhodopseudomonas palustris (strain BisB5).